Consider the following 134-residue polypeptide: DNA-directed RNA polymerase subunit omega (134 aa).

It belongs to the RNA polymerase subunit omega family. In terms of assembly, the RNAP catalytic core consists of 2 alpha, 1 beta, 1 beta' and 1 omega subunit. When a sigma factor is associated with the core the holoenzyme is formed, which can initiate transcription.

It catalyses the reaction RNA(n) + a ribonucleoside 5'-triphosphate = RNA(n+1) + diphosphate. Its function is as follows. Promotes RNA polymerase assembly. Latches the N- and C-terminal regions of the beta' subunit thereby facilitating its interaction with the beta and alpha subunits. The polypeptide is DNA-directed RNA polymerase subunit omega (Brucella anthropi (strain ATCC 49188 / DSM 6882 / CCUG 24695 / JCM 21032 / LMG 3331 / NBRC 15819 / NCTC 12168 / Alc 37) (Ochrobactrum anthropi)).